The following is a 439-amino-acid chain: uncharacterized protein (439 aa).

Residues 273–439 enclose the VWFA domain; that stretch reads PIIILLDHSG…EARKIYKSIS (167 aa).

This is an uncharacterized protein from Methanocaldococcus jannaschii (strain ATCC 43067 / DSM 2661 / JAL-1 / JCM 10045 / NBRC 100440) (Methanococcus jannaschii).